The chain runs to 247 residues: MSEAAKTLDGWYCLHDLRSIDWVSWKTLSSEEREQAIVEFLNIIEKWNKVAAEKQGSHAMYTIVGQKADIMFMLLRPTMEELNEIETELNKTTLAEYMIPAYSYVSVVELSNYLPADEDPYQNPQILARLYPELPTANHICFYPMDKRRQGNDNWYMLPMEERKKLMYSHGKIGRQYAGKVRQVITGSVGFDDYEWGVTLFADDVLQFKKLVYEMRFDEVSARYGEFGTFFVGNILPSEKVTSFLHV.

Residues R129, 143–147, H170, Q183, and S221 each bind Fe-coproporphyrin III; that span reads YPMDK. Residue Y143 is part of the active site.

It belongs to the ChdC family. Type 1 subfamily. Fe-coproporphyrin III serves as cofactor.

It catalyses the reaction Fe-coproporphyrin III + 2 H2O2 + 2 H(+) = heme b + 2 CO2 + 4 H2O. It carries out the reaction Fe-coproporphyrin III + H2O2 + H(+) = harderoheme III + CO2 + 2 H2O. The catalysed reaction is harderoheme III + H2O2 + H(+) = heme b + CO2 + 2 H2O. Its pathway is porphyrin-containing compound metabolism; protoheme biosynthesis. Functionally, involved in coproporphyrin-dependent heme b biosynthesis. Catalyzes the decarboxylation of Fe-coproporphyrin III (coproheme) to heme b (protoheme IX), the last step of the pathway. The reaction occurs in a stepwise manner with a three-propionate intermediate. This Bacillus cytotoxicus (strain DSM 22905 / CIP 110041 / 391-98 / NVH 391-98) protein is Coproheme decarboxylase.